A 194-amino-acid polypeptide reads, in one-letter code: Ribosomal RNA large subunit methyltransferase E (194 aa).

Positions 48, 50, 66, 82, and 110 each coordinate S-adenosyl-L-methionine. The active-site Proton acceptor is lysine 150.

This sequence belongs to the class I-like SAM-binding methyltransferase superfamily. RNA methyltransferase RlmE family.

It localises to the cytoplasm. The enzyme catalyses uridine(2552) in 23S rRNA + S-adenosyl-L-methionine = 2'-O-methyluridine(2552) in 23S rRNA + S-adenosyl-L-homocysteine + H(+). Specifically methylates the uridine in position 2552 of 23S rRNA at the 2'-O position of the ribose in the fully assembled 50S ribosomal subunit. The chain is Ribosomal RNA large subunit methyltransferase E from Picrophilus torridus (strain ATCC 700027 / DSM 9790 / JCM 10055 / NBRC 100828 / KAW 2/3).